A 323-amino-acid chain; its full sequence is Prostaglandin-E(2) 9-reductase (323 aa).

NADP(+) is bound by residues 23-24 and aspartate 50; that span reads TY. Tyrosine 24 is a substrate binding site. Catalysis depends on tyrosine 55, which acts as the Proton donor. Histidine 117 provides a ligand contact to substrate. NADP(+) contacts are provided by residues 166–167, glutamine 190, 216–221, and 270–280; these read SN, YSALGS, and KSFTEKRIKEN.

It belongs to the aldo/keto reductase family.

The protein localises to the cytoplasm. It catalyses the reaction prostaglandin F2alpha + NADP(+) = prostaglandin E2 + NADPH + H(+). The catalysed reaction is (17R,20S)-17,20-dihydroxypregn-4-en-3-one + NADP(+) = 17alpha-hydroxyprogesterone + NADPH + H(+). The enzyme catalyses (17R,20S)-17,20-dihydroxypregn-4-en-3-one + NAD(+) = 17alpha-hydroxyprogesterone + NADH + H(+). Functionally, can convert prostaglandin E2 to prostaglandin F2-alpha. This is Prostaglandin-E(2) 9-reductase (AKR1C5) from Oryctolagus cuniculus (Rabbit).